Consider the following 329-residue polypeptide: MNNLVVNQTVLPDISKPKWDQGTYAGRAKHFFSSTNPLTLFSSRIQQEKCKEIVTNYKTGVISPTLTVDELWKAKTLYDSTYHPDTGEKMFFLGRMSAQMPGNMVTTGMLLGLYRTLPGVVFSHWFNQSFNAVVNYTNRSGNSKATNERLFVSYCCATSGAMTVALGLNKMVKNSHGLAARLVPFAAIALANAINIPMMRSNEASEGMELKDENDQLVGKSQKMAALSIAQVTLSRIAMAMPYMVMTPIIMNRITRTAYYRTRPWMQKYSEIPIQTLIAGIGLYFTTPLCCALFPQKSSVEVEKLESSVQKEIMSRPNPPKIVYYNKGL.

The next 5 membrane-spanning stretches (helical) occupy residues 100–122, 150–167, 178–198, 232–254, and 274–294; these read MPGN…GVVF, LFVS…VALG, LAAR…NIPM, VTLS…MNRI, and IQTL…CALF.

The protein belongs to the sideroflexin family.

It localises to the mitochondrion inner membrane. The catalysed reaction is L-serine(in) = L-serine(out). The enzyme catalyses L-alanine(in) = L-alanine(out). It carries out the reaction L-cysteine(in) = L-cysteine(out). In terms of biological role, amino acid transporter importing serine, an essential substrate of the mitochondrial branch of the one-carbon pathway, into mitochondria. Mitochondrial serine is then converted to glycine and formate, which exits to the cytosol where it is used to generate the charged folates that serve as one-carbon donors. May also transport other amino acids including alanine and cysteine. This chain is Sideroflexin-1.1, found in Caenorhabditis elegans.